Consider the following 1044-residue polypeptide: Outer dynein arm-docking complex subunit 2 (1044 aa).

Composition is skewed to basic and acidic residues over residues 317 to 338 (IKFSEQPQKDQPNEAPKEEVAI) and 379 to 401 (SKDRNTLRDTQVEKHGGKLEKSR). Disordered stretches follow at residues 317–409 (IKFS…PGRA) and 423–446 (ISDSSSESEEDEEQPDHRQEANAD). HEAT repeat units lie at residues 448 to 485 (PSEYWQIQKLVKYLKGGNQTATVIALCSMKDFNLAQET), 487 to 527 (QLAI…NPQI), 530 to 568 (NIVDLGGLPVMVNILDSPHKSLKCLAAETIANVAKFRRA), 627 to 665 (AIRKAGGIPLLARLLKTSHENMLIPVVGTLQECASEENY), and 668 to 706 (AIKAERIIENLVKNLNSENEQLQEHCAMAIYQCAEDEET). 11 ARM repeats span residues 484–523 (ETCQLAIRDVGGLEVLINLLETDEVKCKIGSLKILKEISH), 525–564 (PQIRRNIVDLGGLPVMVNILDSPHKSLKCLAAETIANVAK), 535–577 (GGLP…RHGG), 622–661 (YANKEAIRKAGGIPLLARLLKTSHENMLIPVVGTLQECAS), 663–702 (ENYRAAIKAERIIENLVKNLNSENEQLQEHCAMAIYQCAE), 746–785 (KENVTKFREYKAIETLVGLLTDQPEEVLVNVVGALGECCQ), 828–867 (PESMMIIDRLDGVRLLWSLLKNPHPDVKASAAWALCPCIQ), 871–910 (DAGEMVRSFVGGLELVVNLLKSDNKEVLASVCAVITNIAK), 912–951 (QENLAVITDHGVVPLLSKLANTNNDKLRRHLAETISRCCM), 953–992 (GRNRVAFGEHKAVAPLVRYLKSNDTNVHRATAQALYQLSE), and 1004–1031 (GAVKLLLDMVGSPDEELQEAAAGCISNI). 5 HEAT repeats span residues 831 to 870 (MMIIDRLDGVRLLWSLLKNPHPDVKASAAWALCPCIQNAK), 874 to 914 (EMVR…DQEN), 916 to 955 (AVITDHGVVPLLSKLANTNNDKLRRHLAETISRCCMWGRN), 958 to 996 (AFGEHKAVAPLVRYLKSNDTNVHRATAQALYQLSEDADN), and 999 to 1037 (TMHENGAVKLLLDMVGSPDEELQEAAAGCISNIRRLALA).

As to quaternary structure, component of the outer dynein arm-docking complex along with ODAD1, ODAD3, ODAD4 and CLXN. Interacts with CFAP61. As to expression, expressed in trachea multiciliated cells.

The protein localises to the cytoplasm. It localises to the cytoskeleton. The protein resides in the cilium axoneme. It is found in the cilium basal body. Its function is as follows. Component of the outer dynein arm-docking complex (ODA-DC) that mediates outer dynein arms (ODA) binding onto the doublet microtubule. Involved in mediating assembly of both ODAs and their axonemal docking complex onto ciliary microtubules. The protein is Outer dynein arm-docking complex subunit 2 (ODAD2) of Bos taurus (Bovine).